Here is a 1911-residue protein sequence, read N- to C-terminus: Protein TIC 214 (1911 aa).

The next 6 membrane-spanning stretches (helical) occupy residues 41 to 61 (IINS…FSIG), 81 to 103 (ISAT…YAPL), 108 to 128 (GKPH…FFWN), 147 to 167 (FNIQ…HFIL), 195 to 215 (IGWL…LFWI), and 238 to 258 (IFSI…PLPI). Disordered stretches follow at residues 265–299 (ETSE…STEE), 798–817 (DSEE…KEEN), and 1599–1647 (NQNQ…RKKK). Residues 268 to 297 (ETEESEENEEESDIEITSEPKEQDEEEGST) show a composition bias toward acidic residues. Basic and acidic residues-rich tracts occupy residues 1603–1615 (QEKK…RDLG) and 1623–1635 (QKQK…EKNY).

The protein belongs to the TIC214 family. Part of the Tic complex.

The protein localises to the plastid. The protein resides in the chloroplast inner membrane. In terms of biological role, involved in protein precursor import into chloroplasts. May be part of an intermediate translocation complex acting as a protein-conducting channel at the inner envelope. This Lemna minor (Common duckweed) protein is Protein TIC 214.